The chain runs to 72 residues: MAKEESIKMNGTVIETLPNTMFRVELENGHVVTAHISGKMRKHYIRILTGDKVTVELTPYDLSKGRITYRAR.

The S1-like domain maps to 1-72 (MAKEESIKMN…SKGRITYRAR (72 aa)).

This sequence belongs to the IF-1 family. In terms of assembly, component of the 30S ribosomal translation pre-initiation complex which assembles on the 30S ribosome in the order IF-2 and IF-3, IF-1 and N-formylmethionyl-tRNA(fMet); mRNA recruitment can occur at any time during PIC assembly.

The protein localises to the cytoplasm. In terms of biological role, one of the essential components for the initiation of protein synthesis. Stabilizes the binding of IF-2 and IF-3 on the 30S subunit to which N-formylmethionyl-tRNA(fMet) subsequently binds. Helps modulate mRNA selection, yielding the 30S pre-initiation complex (PIC). Upon addition of the 50S ribosomal subunit IF-1, IF-2 and IF-3 are released leaving the mature 70S translation initiation complex. In Alkalilimnicola ehrlichii (strain ATCC BAA-1101 / DSM 17681 / MLHE-1), this protein is Translation initiation factor IF-1.